We begin with the raw amino-acid sequence, 155 residues long: Ribosome maturation factor RimP (155 aa).

This sequence belongs to the RimP family.

The protein localises to the cytoplasm. Its function is as follows. Required for maturation of 30S ribosomal subunits. The polypeptide is Ribosome maturation factor RimP (Macrococcus caseolyticus (strain JCSC5402) (Macrococcoides caseolyticum)).